Consider the following 395-residue polypeptide: Elongation factor Ts, mitochondrial (395 aa).

Residues 1–63 (MAFARAVRRP…RGFGNFIRSF (63 aa)) constitute a mitochondrion transit peptide.

Belongs to the EF-Ts family.

Its subcellular location is the mitochondrion. Functionally, associates with the EF-Tu.GDP complex and induces the exchange of GDP to GTP. It remains bound to the aminoacyl-tRNA.EF-Tu.GTP complex up to the GTP hydrolysis stage on the ribosome. This Arabidopsis thaliana (Mouse-ear cress) protein is Elongation factor Ts, mitochondrial.